The primary structure comprises 412 residues: Imidazolonepropionase (412 aa).

Positions 73 and 75 each coordinate Fe(3+). The Zn(2+) site is built by His-73 and His-75. 4-imidazolone-5-propanoate is bound by residues Arg-82, Tyr-145, and His-178. Tyr-145 lines the N-formimidoyl-L-glutamate pocket. Fe(3+) is bound at residue His-247. His-247 is a binding site for Zn(2+). Gln-250 serves as a coordination point for 4-imidazolone-5-propanoate. Residue Asp-322 participates in Fe(3+) binding. Residue Asp-322 participates in Zn(2+) binding. Asn-324 and Gly-326 together coordinate N-formimidoyl-L-glutamate. Position 327 (Ser-327) interacts with 4-imidazolone-5-propanoate.

The protein belongs to the metallo-dependent hydrolases superfamily. HutI family. Zn(2+) is required as a cofactor. Fe(3+) serves as cofactor.

The protein resides in the cytoplasm. It carries out the reaction 4-imidazolone-5-propanoate + H2O = N-formimidoyl-L-glutamate. Its pathway is amino-acid degradation; L-histidine degradation into L-glutamate; N-formimidoyl-L-glutamate from L-histidine: step 3/3. In terms of biological role, catalyzes the hydrolytic cleavage of the carbon-nitrogen bond in imidazolone-5-propanoate to yield N-formimidoyl-L-glutamate. It is the third step in the universal histidine degradation pathway. This Shewanella amazonensis (strain ATCC BAA-1098 / SB2B) protein is Imidazolonepropionase.